The primary structure comprises 485 residues: N-succinylglutamate 5-semialdehyde dehydrogenase (485 aa).

Residue 220-225 participates in NAD(+) binding; it reads GSANTG. Catalysis depends on residues Glu-243 and Cys-278.

It belongs to the aldehyde dehydrogenase family. AstD subfamily.

It carries out the reaction N-succinyl-L-glutamate 5-semialdehyde + NAD(+) + H2O = N-succinyl-L-glutamate + NADH + 2 H(+). Its pathway is amino-acid degradation; L-arginine degradation via AST pathway; L-glutamate and succinate from L-arginine: step 4/5. In terms of biological role, catalyzes the NAD-dependent reduction of succinylglutamate semialdehyde into succinylglutamate. The chain is N-succinylglutamate 5-semialdehyde dehydrogenase from Vibrio cholerae serotype O1 (strain M66-2).